The following is a 352-amino-acid chain: tRNA pseudouridine synthase D (352 aa).

D81 serves as the catalytic Nucleophile. A TRUD domain is found at 157-303; sequence GVPNYFGLQR…MLHERRILRL (147 aa).

This sequence belongs to the pseudouridine synthase TruD family.

The enzyme catalyses uridine(13) in tRNA = pseudouridine(13) in tRNA. Responsible for synthesis of pseudouridine from uracil-13 in transfer RNAs. The chain is tRNA pseudouridine synthase D from Azotobacter vinelandii (strain DJ / ATCC BAA-1303).